The sequence spans 1358 residues: Mediator of RNA polymerase II transcription subunit 12 (1358 aa).

It belongs to the Mediator complex subunit 12 family. As to quaternary structure, component of the SRB8-11 complex, which itself associates with the Mediator complex.

The protein localises to the nucleus. In terms of biological role, component of the SRB8-11 complex. The SRB8-11 complex is a regulatory module of the Mediator complex which is itself involved in regulation of basal and activated RNA polymerase II-dependent transcription. The SRB8-11 complex may be involved in the transcriptional repression of a subset of genes regulated by Mediator. It may inhibit the association of the Mediator complex with RNA polymerase II to form the holoenzyme complex. This is Mediator of RNA polymerase II transcription subunit 12 (SRB8) from Candida glabrata (strain ATCC 2001 / BCRC 20586 / JCM 3761 / NBRC 0622 / NRRL Y-65 / CBS 138) (Yeast).